A 1035-amino-acid polypeptide reads, in one-letter code: POM121-like protein 2 (1035 aa).

Disordered stretches follow at residues 1-37 (MGSFLSKLELSPSSPAQVRTDLPERPTKRRPPQPLHQ), 177-213 (LFPESLDSKRRSPETRPSAFKPLMKNGTLTSFVPRPG), 286-343 (IKKE…LGYA), 415-508 (LGPL…QSTL), 754-791 (SPLGSSSRPPFPLSQGANPQPAFGATNGQKQGPSQPAL), and 972-1035 (NTPV…AYKK). Residues 27-37 (TKRRPPQPLHQ) are compositionally biased toward basic residues. The span at 309–319 (GGSESSGQQNQ) shows a compositional bias: low complexity. Composition is skewed to polar residues over residues 320–330 (KIPQLPSSPEN), 420–431 (SPQSTGEATSVA), and 445–462 (GCSQSELLPGTSPDSKPT). Residues 464 to 481 (TFILLTPTSPTLPVTDTT) are compositionally biased toward low complexity. Positions 493–502 (PMPPDPPAPP) are enriched in pro residues. The span at 1000–1016 (RGPFRSSASSFSIGAKS) shows a compositional bias: low complexity. Residues 1017-1035 (KTPKNREKGHSRRHHAYKK) show a composition bias toward basic residues.

Belongs to the POM121 family.

The protein is POM121-like protein 2 (POM121L2) of Homo sapiens (Human).